The following is a 299-amino-acid chain: Homoserine kinase (299 aa).

Position 85 to 95 (85 to 95 (PMSRGLGSSAT)) interacts with ATP.

This sequence belongs to the GHMP kinase family. Homoserine kinase subfamily.

Its subcellular location is the cytoplasm. It carries out the reaction L-homoserine + ATP = O-phospho-L-homoserine + ADP + H(+). It functions in the pathway amino-acid biosynthesis; L-threonine biosynthesis; L-threonine from L-aspartate: step 4/5. In terms of biological role, catalyzes the ATP-dependent phosphorylation of L-homoserine to L-homoserine phosphate. This is Homoserine kinase from Clostridium novyi (strain NT).